The primary structure comprises 1077 residues: Teashirt homolog 1-B (1077 aa).

2 disordered regions span residues 1–110 (MPRR…NASY) and 142–179 (NEKA…SCTN). Positions 26-36 (TEEDNLEDDGL) are enriched in acidic residues. The span at 56–69 (TQSYQNSPISSATN) shows a compositional bias: polar residues. The segment covering 160-179 (SGPTSDPGTPTTITSSSCTN) has biased composition (low complexity). Residues 248–272 (FRCKDCSAAYDTLVELTVHMNETGH) form a C2H2-type 1 zinc finger. The span at 274–286 (RDDNRDREAERTK) shows a compositional bias: basic and acidic residues. Residues 274 to 300 (RDDNRDREAERTKRWSKPRKRSLMEME) are disordered. A C2H2-type 2 zinc finger spans residues 309–333 (LKCMYCGHSFESLQDLSVHMIKTKH). The segment at 362–394 (ALPDSPEQAGISPGASVSESAKDPKAANPYVTP) is disordered. The C2H2-type 3 zinc-finger motif lies at 418–442 (LKCMECGSSHDTLQQLTAHMMVTGH). Disordered stretches follow at residues 473–530 (PPTT…KIEP) and 849–873 (GRLT…SSFE). The span at 497–529 (HSEEKKDPEKEKVNIGEVEKKIKEENEDPEKIE) shows a compositional bias: basic and acidic residues. The span at 853-862 (PKSSTPSTVS) shows a compositional bias: polar residues. The homeobox DNA-binding region spans 885–955 (RKGRQSNWNP…NVKYQLRRTG (71 aa)). 2 C2H2-type zinc fingers span residues 970 to 992 (FFCN…LETH) and 1037 to 1060 (FQCK…SKTH).

The protein belongs to the teashirt C2H2-type zinc-finger protein family.

The protein localises to the nucleus. Its function is as follows. Probable transcriptional regulator involved in developmental processes. May act as a transcriptional repressor (Potential). Involved in two major neuronal regionalization processes: primary anteroposterior (AP) axis patterning of the CNS and segmentation of the cranial neuronal crest (CNS) development. The protein is Teashirt homolog 1-B (tshz1-b) of Xenopus laevis (African clawed frog).